The sequence spans 554 residues: Urocanate hydratase (554 aa).

Residues 51–52 (GG), glutamine 129, 175–177 (GMG), glutamate 195, arginine 200, 241–242 (NA), 262–266 (QTSAH), 272–273 (YL), and tyrosine 321 each bind NAD(+). The active site involves cysteine 409. Glycine 491 contributes to the NAD(+) binding site.

This sequence belongs to the urocanase family. NAD(+) is required as a cofactor.

Its subcellular location is the cytoplasm. The enzyme catalyses 4-imidazolone-5-propanoate = trans-urocanate + H2O. It functions in the pathway amino-acid degradation; L-histidine degradation into L-glutamate; N-formimidoyl-L-glutamate from L-histidine: step 2/3. Functionally, catalyzes the conversion of urocanate to 4-imidazolone-5-propionate. The chain is Urocanate hydratase from Caulobacter sp. (strain K31).